The following is a 416-amino-acid chain: Gamma-glutamyl phosphate reductase (416 aa).

Belongs to the gamma-glutamyl phosphate reductase family.

Its subcellular location is the cytoplasm. It carries out the reaction L-glutamate 5-semialdehyde + phosphate + NADP(+) = L-glutamyl 5-phosphate + NADPH + H(+). Its pathway is amino-acid biosynthesis; L-proline biosynthesis; L-glutamate 5-semialdehyde from L-glutamate: step 2/2. In terms of biological role, catalyzes the NADPH-dependent reduction of L-glutamate 5-phosphate into L-glutamate 5-semialdehyde and phosphate. The product spontaneously undergoes cyclization to form 1-pyrroline-5-carboxylate. The protein is Gamma-glutamyl phosphate reductase of Salmonella typhi.